A 317-amino-acid polypeptide reads, in one-letter code: Glycerol-3-phosphate dehydrogenase [NAD(P)+] (317 aa).

NADPH contacts are provided by serine 14, phenylalanine 15, arginine 35, and lysine 109. Residues lysine 109 and glycine 137 each contribute to the sn-glycerol 3-phosphate site. Alanine 141 contacts NADPH. Lysine 192, aspartate 248, serine 258, arginine 259, and asparagine 260 together coordinate sn-glycerol 3-phosphate. Lysine 192 functions as the Proton acceptor in the catalytic mechanism. Arginine 259 provides a ligand contact to NADPH. NADPH is bound by residues leucine 283 and glutamate 285.

Belongs to the NAD-dependent glycerol-3-phosphate dehydrogenase family.

It is found in the cytoplasm. It catalyses the reaction sn-glycerol 3-phosphate + NAD(+) = dihydroxyacetone phosphate + NADH + H(+). The catalysed reaction is sn-glycerol 3-phosphate + NADP(+) = dihydroxyacetone phosphate + NADPH + H(+). Its pathway is membrane lipid metabolism; glycerophospholipid metabolism. Functionally, catalyzes the reduction of the glycolytic intermediate dihydroxyacetone phosphate (DHAP) to sn-glycerol 3-phosphate (G3P), the key precursor for phospholipid synthesis. This is Glycerol-3-phosphate dehydrogenase [NAD(P)+] from Rickettsia akari (strain Hartford).